Reading from the N-terminus, the 205-residue chain is Ribosomal RNA small subunit methyltransferase G (205 aa).

S-adenosyl-L-methionine is bound by residues Gly70, Leu75, 121–122 (IE), and Arg136.

The protein belongs to the methyltransferase superfamily. RNA methyltransferase RsmG family.

The protein resides in the cytoplasm. It catalyses the reaction guanosine(527) in 16S rRNA + S-adenosyl-L-methionine = N(7)-methylguanosine(527) in 16S rRNA + S-adenosyl-L-homocysteine. Specifically methylates the N7 position of guanine in position 527 of 16S rRNA. This chain is Ribosomal RNA small subunit methyltransferase G, found in Methylococcus capsulatus (strain ATCC 33009 / NCIMB 11132 / Bath).